The sequence spans 633 residues: ATP-dependent zinc metalloprotease FtsH (633 aa).

Residues 1 to 19 (MTPSNEPGKQDQIPQPGPT) lie on the Cytoplasmic side of the membrane. Residues 20-40 (IPNQYSFLWLSAAIFLMFLWL) traverse the membrane as a helical segment. Topologically, residues 41-133 (QGNNQQQQQE…SRSGRPWWQE (93 aa)) are periplasmic. The chain crosses the membrane as a helical span at residues 134–154 (LILGFLPWILLLALMFWFWGA). The Cytoplasmic portion of the chain corresponds to 155–633 (AQKRMTQGGG…LEEARSRETA (479 aa)). Residue 226-233 (GPPGTGKT) coordinates ATP. Residue H447 coordinates Zn(2+). The active site involves E448. Positions 451 and 523 each coordinate Zn(2+).

It in the central section; belongs to the AAA ATPase family. The protein in the C-terminal section; belongs to the peptidase M41 family. As to quaternary structure, homohexamer. Zn(2+) is required as a cofactor.

It is found in the cell inner membrane. Acts as a processive, ATP-dependent zinc metallopeptidase for both cytoplasmic and membrane proteins. Plays a role in the quality control of integral membrane proteins. The protein is ATP-dependent zinc metalloprotease FtsH of Marinobacter nauticus (strain ATCC 700491 / DSM 11845 / VT8) (Marinobacter aquaeolei).